An 89-amino-acid chain; its full sequence is Barrier-to-autointegration factor 1 (89 aa).

This sequence belongs to the BAF family. In terms of assembly, interacts with emr-1 and lem-2. Interacts with lem-4l, leading to decreased phosphorylation by VRK1 and promoting dephosphorylation by protein phosphatase 2A (PP2A). In terms of processing, phosphorylated by vrk-1. Phosphorylation by vrk-1 in mitosis is essential to achieve correct timing of recruitment of nuclear envelope components during nuclear envelope assembly. Dephosphorylated by protein phosphatase 2A (PP2A) following interaction with lem-4l during mitotic exit, leading to mitotic nuclear envelope reassembly.

The protein resides in the nucleus. In terms of biological role, DNA-binding protein which plays an essential role in nuclear envelope formation. Required for normal chromosome segregation during mitosis. Associates with the nuclear lamina via its interaction with LEM domain containing proteins emr-1 and lem-2. In association with lem-3, plays a role in radiation-induced DNA damage repair response. The protein is Barrier-to-autointegration factor 1 (baf-1) of Caenorhabditis elegans.